Reading from the N-terminus, the 460-residue chain is Muscarinic acetylcholine receptor M1 (460 aa).

The Extracellular portion of the chain corresponds to 1 to 22; that stretch reads MNTSVPPAVSPNITVLAPGKGP. 2 N-linked (GlcNAc...) asparagine glycosylation sites follow: asparagine 2 and asparagine 12. A helical transmembrane segment spans residues 23–48; sequence WQVAFIGITTGLLSLATVTGNLLVLI. Topologically, residues 49–62 are cytoplasmic; the sequence is SFKVNTELKTVNNY. The chain crosses the membrane as a helical span at residues 63–84; the sequence is FLLSLACADLIIGTFSMNLYTT. Residues 85–95 are Extracellular-facing; it reads YLLMGHWALGT. The chain crosses the membrane as a helical span at residues 96–121; the sequence is LACDLWLALDYVASNASVMNLLLISF. Cysteines 98 and 178 form a disulfide. The Cytoplasmic segment spans residues 122–142; the sequence is DRYFSVTRPLSYRAKRTPRRA. Residues 143 to 164 traverse the membrane as a helical segment; sequence ALMIGLAWLVSFVLWAPAILFW. Over 165–185 the chain is Extracellular; that stretch reads QYLVGERTVLAGQCYIQFLSQ. A helical membrane pass occupies residues 186–209; the sequence is PIITFGTAMAAFYLPVTVMCTLYW. The Cytoplasmic portion of the chain corresponds to 210–366; that stretch reads RIYRETENRA…LVKEKKAART (157 aa). Disordered regions lie at residues 225–257, 274–297, and 310–351; these read LQGSETPGKGGGSSSSSERSQPGAEGSPESPPG, WKEEEEEDEGSMESLTSSEGEEPG, and EAQA…QLAK. At threonine 230 the chain carries Phosphothreonine. Residues 238–257 are compositionally biased toward low complexity; sequence SSSSERSQPGAEGSPESPPG. The residue at position 254 (serine 254) is a Phosphoserine. The span at 328 to 343 shows a compositional bias: basic residues; the sequence is RPTKKGRDRGGKGQKP. The helical transmembrane segment at 367–390 threads the bilayer; the sequence is LSAILLAFILTWTPYNIMVLVSTF. At 391–397 the chain is on the extracellular side; it reads CKDCVPE. A helical transmembrane segment spans residues 398-420; sequence TLWELGYWLCYVNSTVNPMCYAL. Residues 421-460 lie on the Cytoplasmic side of the membrane; that stretch reads CNKAFRDTFRLLLLCRWDKRRWRKIPKRPGSVHRTPSRQC. Phosphoserine is present on serine 451. Threonine 455 bears the Phosphothreonine mark. Serine 457 is subject to Phosphoserine.

The protein belongs to the G-protein coupled receptor 1 family. Muscarinic acetylcholine receptor subfamily. CHRM1 sub-subfamily. Interacts with GPRASP2. Interacts with TMEM147.

The protein resides in the cell membrane. The protein localises to the postsynaptic cell membrane. Its function is as follows. The muscarinic acetylcholine receptor mediates various cellular responses, including inhibition of adenylate cyclase, breakdown of phosphoinositides and modulation of potassium channels through the action of G proteins. Primary transducing effect is Pi turnover. This chain is Muscarinic acetylcholine receptor M1 (Chrm1), found in Mus musculus (Mouse).